A 661-amino-acid chain; its full sequence is Solute carrier organic anion transporter family member 1A4 (661 aa).

The Cytoplasmic segment spans residues 1-20 (MGKSEKRVATHGVRCFAKIK). The helical transmembrane segment at 21–40 (MFLLALTCAYVSKSLSGTYM) threads the bilayer. Topologically, residues 41-59 (NSMLTQIERQFGIPTSIVG) are extracellular. The helical transmembrane segment at 60–80 (LINGSFEIGNLLLIIFVSYFG) threads the bilayer. Residues 81 to 86 (TKLHRP) lie on the Cytoplasmic side of the membrane. Residues 87–111 (IMIGVGCAVMGLGCFLISLPHFLMG) form a helical membrane-spanning segment. Residues 112 to 154 (QYEYETILPTSNVSSNSFFCVENRSQTLNPTQDPSECVKEMKS) lie on the Extracellular side of the membrane. Asparagine 123 and asparagine 134 each carry an N-linked (GlcNAc...) asparagine glycan. A helical membrane pass occupies residues 155-183 (LMWIYVLVGNIIRGIGETPIMPLGISYIE). The Cytoplasmic segment spans residues 184–202 (DFAKSENSPLYIGILETGM). Residues 203-223 (TIGPLIGLLLASSCANIYVDI) traverse the membrane as a helical segment. Residues 224-241 (ESVNTDDLTITPTDTRWV) lie on the Extracellular side of the membrane. The chain crosses the membrane as a helical span at residues 242–266 (GAWWIGFLVCAGVNILTSFPFFFFP). Topologically, residues 267 to 310 (KTLPKEGLQENVDGTENAKEKKHRKKAKEEKRGITKDFFVFMKS) are cytoplasmic. The helical transmembrane segment at 311 to 332 (LSCNPIYMLFILISVLQFNAFI) threads the bilayer. The Extracellular portion of the chain corresponds to 333–352 (NSFTFMPKYLEQQYGKSTAE). Residues 353–376 (VVFLMGLYMLPPICLGYLIGGLIM) traverse the membrane as a helical segment. Topologically, residues 377–380 (KKFK) are cytoplasmic. Residues 381–404 (VTVKKAAHLAFWLCLSEYLLSFLS) traverse the membrane as a helical segment. The Extracellular portion of the chain corresponds to 405-512 (YVMTCDNFPV…PDCANKLQYF (108 aa)). The Kazal-like domain maps to 432–487 (NKVLADCNTRCNCSTNTWDPVCGDNGLAYMSACLAGCEKSVGTGTNMVFQNCSCIQ). 3 disulfide bridges follow: cysteine 438–cysteine 468, cysteine 444–cysteine 464, and cysteine 453–cysteine 485. Asparagine 443 is a glycosylation site (N-linked (GlcNAc...) asparagine). Residues asparagine 482 and asparagine 491 are each glycosylated (N-linked (GlcNAc...) asparagine). A helical membrane pass occupies residues 513–535 (LIIAIFGCFIYSLAGIPGYMVLL). Residues 536 to 544 (RCIKSEEKS) lie on the Cytoplasmic side of the membrane. The helical transmembrane segment at 545–570 (LGVGLHAFCIRILAGIPAPIYFGALI) threads the bilayer. The Extracellular segment spans residues 571–604 (DRTCLHWGTLKCGEPGACRMYDINSFRRLYLGLP). The helical transmembrane segment at 605–622 (AALRGASFVPAFFILRLT) threads the bilayer. Over 623–661 (RTFQFPGDIESSKTDHAEMKLTLKESECTEVLRSKVTED) the chain is Cytoplasmic. 2 positions are modified to phosphoserine: serine 633 and serine 634.

Belongs to the organo anion transporter (TC 2.A.60) family. As to expression, highly expressed in brain, liver, and kidney but not expressed in heart, spleen, lung, skeletal muscle, and testis.

The protein localises to the cell membrane. It catalyses the reaction estrone 3-sulfate(out) = estrone 3-sulfate(in). The enzyme catalyses taurocholate(out) = taurocholate(in). The catalysed reaction is prostaglandin E2(out) = prostaglandin E2(in). It carries out the reaction L-thyroxine(out) = L-thyroxine(in). Mediates the Na(+)-independent transport of organic anions such as taurocholate, cholate, 17-beta-glucuronosyl estradiol, prostaglandin E2, estrone 3-sulfate, L-thyroxine (T4), the cardiac glycosides ouabain and digoxin and thyroid hormones. May play an especially important role in the brain accumulation and toxicity of digoxin and in the hepatobiliary and renal excretion of cardiac glycosides. Shows a pH-sensitive substrate specificity which may be ascribed to the protonation state of the binding site and leads to a stimulation of substrate transport in an acidic microenvironment. Hydrogencarbonate/HCO3(-) acts as the probable counteranion that exchanges for organic anions. In Rattus norvegicus (Rat), this protein is Solute carrier organic anion transporter family member 1A4 (Slco1a4).